A 331-amino-acid polypeptide reads, in one-letter code: Aspartate carbamoyltransferase catalytic subunit (331 aa).

Carbamoyl phosphate contacts are provided by Arg-66 and Thr-67. An L-aspartate-binding site is contributed by Lys-94. Residues Arg-116, His-149, and Gln-152 each coordinate carbamoyl phosphate. L-aspartate contacts are provided by Arg-189 and Arg-243. Gly-284 and Pro-285 together coordinate carbamoyl phosphate.

Belongs to the aspartate/ornithine carbamoyltransferase superfamily. ATCase family. As to quaternary structure, heterododecamer (2C3:3R2) of six catalytic PyrB chains organized as two trimers (C3), and six regulatory PyrI chains organized as three dimers (R2).

It catalyses the reaction carbamoyl phosphate + L-aspartate = N-carbamoyl-L-aspartate + phosphate + H(+). The protein operates within pyrimidine metabolism; UMP biosynthesis via de novo pathway; (S)-dihydroorotate from bicarbonate: step 2/3. In terms of biological role, catalyzes the condensation of carbamoyl phosphate and aspartate to form carbamoyl aspartate and inorganic phosphate, the committed step in the de novo pyrimidine nucleotide biosynthesis pathway. The chain is Aspartate carbamoyltransferase catalytic subunit from Thermosynechococcus vestitus (strain NIES-2133 / IAM M-273 / BP-1).